The following is an 892-amino-acid chain: Alanine--tRNA ligase (892 aa).

4 residues coordinate Zn(2+): His565, His569, Cys678, and His682. The tract at residues 857–876 (GGKGGGGRPDMAQAGGPDGA) is disordered.

This sequence belongs to the class-II aminoacyl-tRNA synthetase family. It depends on Zn(2+) as a cofactor.

The protein localises to the cytoplasm. It catalyses the reaction tRNA(Ala) + L-alanine + ATP = L-alanyl-tRNA(Ala) + AMP + diphosphate. Catalyzes the attachment of alanine to tRNA(Ala) in a two-step reaction: alanine is first activated by ATP to form Ala-AMP and then transferred to the acceptor end of tRNA(Ala). Also edits incorrectly charged Ser-tRNA(Ala) and Gly-tRNA(Ala) via its editing domain. This is Alanine--tRNA ligase from Bradyrhizobium diazoefficiens (strain JCM 10833 / BCRC 13528 / IAM 13628 / NBRC 14792 / USDA 110).